Here is a 367-residue protein sequence, read N- to C-terminus: Pyrimidine monooxygenase RutA (367 aa).

Residues 50–51 (IK), Asn116, Glu125, 141–142 (RY), and Ser191 contribute to the FMN site.

It belongs to the NtaA/SnaA/DszA monooxygenase family. RutA subfamily.

The enzyme catalyses uracil + FMNH2 + NADH + O2 = (Z)-3-ureidoacrylate + FMN + NAD(+) + H2O + H(+). It carries out the reaction thymine + FMNH2 + NADH + O2 = (Z)-2-methylureidoacrylate + FMN + NAD(+) + H2O + H(+). In terms of biological role, catalyzes the pyrimidine ring opening between N-3 and C-4 by an unusual flavin hydroperoxide-catalyzed mechanism, adding oxygen atoms in the process to yield ureidoacrylate peracid, that immediately reacts with FMN forming ureidoacrylate and FMN-N(5)-oxide. The FMN-N(5)-oxide reacts spontaneously with NADH to produce FMN. Requires the flavin reductase RutF to regenerate FMN in vivo. The protein is Pyrimidine monooxygenase RutA of Allorhizobium ampelinum (strain ATCC BAA-846 / DSM 112012 / S4) (Agrobacterium vitis (strain S4)).